The following is a 386-amino-acid chain: Hemagglutinin-esterase (386 aa).

An N-terminal signal peptide occupies residues Met1–Cys11. Positions Met1–Val121 are esterase domain 1. At Tyr12 to Ile359 the chain is on the virion surface side. Catalysis depends on Ser34, which acts as the Nucleophile. Cys38 and Cys59 are disulfide-bonded. 4 N-linked (GlcNAc...) asparagine; by host glycosylation sites follow: Asn83, Asn110, Asn145, and Asn168. Cys107 and Cys154 are disulfide-bonded. The interval Arg122–Pro236 is receptor binding. Disulfide bonds link Cys180–Cys246, Cys188–Cys219, and Cys277–Cys282. The segment at Phe237–His349 is esterase domain 2. Residue Asn286 is glycosylated (N-linked (GlcNAc...) asparagine; by host). Catalysis depends on charge relay system residues Asp296 and His299. Residues Cys317 and Cys341 are joined by a disulfide bond. A glycan (N-linked (GlcNAc...) asparagine; by host) is linked at Asn328. The helical transmembrane segment at Ile360–Leu380 threads the bilayer. Over Tyr381–His386 the chain is Intravirion.

Belongs to the influenza type C/coronaviruses hemagglutinin-esterase family. As to quaternary structure, homodimer; disulfide-linked. Forms a complex with the M protein in the pre-Golgi. Associates then with S-M complex to form a ternary complex S-M-HE. Post-translationally, N-glycosylated in the host RER.

It is found in the virion membrane. The protein localises to the host cell membrane. The catalysed reaction is N-acetyl-9-O-acetylneuraminate + H2O = N-acetylneuraminate + acetate + H(+). It carries out the reaction N-acetyl-4-O-acetylneuraminate + H2O = N-acetylneuraminate + acetate + H(+). Its function is as follows. Structural protein that makes short spikes at the surface of the virus. Contains receptor binding and receptor-destroying activities. Mediates de-O-acetylation of N-acetyl-4-O-acetylneuraminic acid, which is probably the receptor determinant recognized by the virus on the surface of erythrocytes and susceptible cells. This receptor-destroying activity is important for virus release as it probably helps preventing self-aggregation and ensures the efficient spread of the progeny virus from cell to cell. May serve as a secondary viral attachment protein for initiating infection, the spike protein being the major one. May become a target for both the humoral and the cellular branches of the immune system. This chain is Hemagglutinin-esterase, found in Homo sapiens (Human).